Consider the following 180-residue polypeptide: CASP-like protein 2A3 (180 aa).

The Cytoplasmic portion of the chain corresponds to 1 to 13; that stretch reads MELIYGSTMRKKW. Residues 14-34 form a helical membrane-spanning segment; it reads IEPALRFLPVGLCISALALML. Over 35-55 the chain is Extracellular; it reads KSKEGNENGILEYKHVGAFRY. A helical membrane pass occupies residues 56–76; the sequence is LAYANGICAAYSVLSTFNSVV. The Cytoplasmic segment spans residues 77 to 85; it reads PRSCSLSRA. Residues 86–106 traverse the membrane as a helical segment; it reads WFVFVFDQAFTYLMLGAGAVV. The Extracellular segment spans residues 107 to 135; that stretch reads TEVLYLAYKGDEKITWFEICPYYGRFCNR. The chain crosses the membrane as a helical span at residues 136-156; sequence VAASLVISFLALLCFIPLSLI. The Cytoplasmic segment spans residues 157 to 180; sequence SAYRVFSKYDPPSLCKKDQITSQS.

It belongs to the Casparian strip membrane proteins (CASP) family. Homodimer and heterodimers.

It localises to the cell membrane. The sequence is that of CASP-like protein 2A3 from Picea sitchensis (Sitka spruce).